We begin with the raw amino-acid sequence, 372 residues long: Queuine tRNA-ribosyltransferase (372 aa).

Asp92 functions as the Proton acceptor in the catalytic mechanism. Substrate contacts are provided by residues 92-96 (DSGGF), Asp146, Gln188, and Gly215. The segment at 246–252 (GIGTLRE) is RNA binding. Residue Asp265 is the Nucleophile of the active site. Residues 270 to 274 (TRLGR) form an RNA binding; important for wobble base 34 recognition region. 4 residues coordinate Zn(2+): Cys303, Cys305, Cys308, and His334.

The protein belongs to the queuine tRNA-ribosyltransferase family. As to quaternary structure, homodimer. Within each dimer, one monomer is responsible for RNA recognition and catalysis, while the other monomer binds to the replacement base PreQ1. The cofactor is Zn(2+).

It carries out the reaction 7-aminomethyl-7-carbaguanine + guanosine(34) in tRNA = 7-aminomethyl-7-carbaguanosine(34) in tRNA + guanine. Its pathway is tRNA modification; tRNA-queuosine biosynthesis. In terms of biological role, catalyzes the base-exchange of a guanine (G) residue with the queuine precursor 7-aminomethyl-7-deazaguanine (PreQ1) at position 34 (anticodon wobble position) in tRNAs with GU(N) anticodons (tRNA-Asp, -Asn, -His and -Tyr). Catalysis occurs through a double-displacement mechanism. The nucleophile active site attacks the C1' of nucleotide 34 to detach the guanine base from the RNA, forming a covalent enzyme-RNA intermediate. The proton acceptor active site deprotonates the incoming PreQ1, allowing a nucleophilic attack on the C1' of the ribose to form the product. After dissociation, two additional enzymatic reactions on the tRNA convert PreQ1 to queuine (Q), resulting in the hypermodified nucleoside queuosine (7-(((4,5-cis-dihydroxy-2-cyclopenten-1-yl)amino)methyl)-7-deazaguanosine). The chain is Queuine tRNA-ribosyltransferase from Synechococcus sp. (strain CC9311).